The sequence spans 207 residues: Ribosomal RNA large subunit methyltransferase E (207 aa).

Residues glycine 60, tryptophan 62, aspartate 80, aspartate 96, and aspartate 121 each coordinate S-adenosyl-L-methionine. Lysine 161 serves as the catalytic Proton acceptor.

It belongs to the class I-like SAM-binding methyltransferase superfamily. RNA methyltransferase RlmE family.

It localises to the cytoplasm. It catalyses the reaction uridine(2552) in 23S rRNA + S-adenosyl-L-methionine = 2'-O-methyluridine(2552) in 23S rRNA + S-adenosyl-L-homocysteine + H(+). Its function is as follows. Specifically methylates the uridine in position 2552 of 23S rRNA at the 2'-O position of the ribose in the fully assembled 50S ribosomal subunit. The sequence is that of Ribosomal RNA large subunit methyltransferase E from Marinobacter nauticus (strain ATCC 700491 / DSM 11845 / VT8) (Marinobacter aquaeolei).